Consider the following 307-residue polypeptide: Ribosomal RNA small subunit methyltransferase H (307 aa).

S-adenosyl-L-methionine-binding positions include 32–34 (GGH), Asp52, Phe78, Asp100, and Gln107.

The protein belongs to the methyltransferase superfamily. RsmH family.

It is found in the cytoplasm. It carries out the reaction cytidine(1402) in 16S rRNA + S-adenosyl-L-methionine = N(4)-methylcytidine(1402) in 16S rRNA + S-adenosyl-L-homocysteine + H(+). Its function is as follows. Specifically methylates the N4 position of cytidine in position 1402 (C1402) of 16S rRNA. This Coxiella burnetii (strain Dugway 5J108-111) protein is Ribosomal RNA small subunit methyltransferase H.